A 56-amino-acid polypeptide reads, in one-letter code: Large ribosomal subunit protein bL32 (56 aa).

Residues 1–21 form a disordered region; it reads MAVQKNKPTRSKRGMRRSHDA. Over residues 7–16 the composition is skewed to basic residues; sequence KPTRSKRGMR.

The protein belongs to the bacterial ribosomal protein bL32 family.

This Hamiltonella defensa subsp. Acyrthosiphon pisum (strain 5AT) protein is Large ribosomal subunit protein bL32.